A 448-amino-acid polypeptide reads, in one-letter code: MNKTIDITLSPHWEDRISNEQKLRRNDQRSVFQRDRARILHSAAFRRLQAKTQVHGPGSANDFYRTRLTHSLEVSQIGTGIVAQLKLRQPEFRHLLTSTSLMESICLAHDIGHPPFGHGGEIALNYMMRNHGGFEGNGQTLRILSKLEPYTEHFGMNLARRTLMGVLKYPAFLDQVHSKYRPDDVTNLRHLKSIEWHPPKGIYRDDESILHWITAPLSEADKTLFSTFRFQKENDKVHKKTRFKSIDCSIMELADDIAYGIHDLEDAIVMGIVTRNQWQESVASKLAECGDEWFEAHINNIGDKLFSGLQYQRKDGIGGMVNALLTSITIQKSTFEEEQSFESELLKWNAYLSPSMSYALNILKKFVGQYVIHNSEMQRIEYKGQQIVMEIFDALNSDPERLLPENDKREWREAKESGTNHHRIIADYIAGMTDGYAQRLYNQLFVPI.

An HD domain is found at 67–260 (RLTHSLEVSQ…MELADDIAYG (194 aa)).

Belongs to the dGTPase family. Type 2 subfamily.

The protein is Deoxyguanosinetriphosphate triphosphohydrolase-like protein of Aliivibrio salmonicida (strain LFI1238) (Vibrio salmonicida (strain LFI1238)).